Consider the following 127-residue polypeptide: Protein ApaG (127 aa).

The ApaG domain occupies 3 to 127; the sequence is KDKRYAFSVK…FQLNMPRVLH (125 aa).

The protein is Protein ApaG of Methylobacillus flagellatus (strain ATCC 51484 / DSM 6875 / VKM B-1610 / KT).